The sequence spans 66 residues: UPF0370 protein YpfN (66 aa).

The helical transmembrane segment at 4-24 (LAKYWWILVLVFLVGVLLNVI) threads the bilayer. Residues 39-66 (KPELPPHRDFNDKWDDEDGWPKKDQPKK) form a disordered region. A compositionally biased stretch (basic and acidic residues) spans 42-66 (LPPHRDFNDKWDDEDGWPKKDQPKK).

This sequence belongs to the UPF0370 family.

The protein resides in the cell membrane. The sequence is that of UPF0370 protein YpfN from Salmonella paratyphi B (strain ATCC BAA-1250 / SPB7).